Reading from the N-terminus, the 78-residue chain is Translational regulator CsrA (78 aa).

It belongs to the CsrA/RsmA family. In terms of assembly, homodimer; the beta-strands of each monomer intercalate to form a hydrophobic core, while the alpha-helices form wings that extend away from the core.

It is found in the cytoplasm. Functionally, a translational regulator that binds mRNA to regulate translation initiation and/or mRNA stability. Usually binds in the 5'-UTR at or near the Shine-Dalgarno sequence preventing ribosome-binding, thus repressing translation. Its main target seems to be the major flagellin gene, while its function is anatagonized by FliW. The protein is Translational regulator CsrA of Caldicellulosiruptor bescii (strain ATCC BAA-1888 / DSM 6725 / KCTC 15123 / Z-1320) (Anaerocellum thermophilum).